Reading from the N-terminus, the 253-residue chain is uncharacterized protein (253 aa).

The signal sequence occupies residues 1-19; sequence MRYLKRITIYISLLILVSG. A lipid anchor (N-palmitoyl cysteine) is attached at C20. Residue C20 is the site of S-diacylglycerol cysteine attachment.

The protein belongs to the staphylococcal tandem lipoprotein family.

Its subcellular location is the cell membrane. This is an uncharacterized protein from Staphylococcus epidermidis (strain ATCC 12228 / FDA PCI 1200).